Here is an 83-residue protein sequence, read N- to C-terminus: Exodeoxyribonuclease 7 small subunit (83 aa).

Belongs to the XseB family. Heterooligomer composed of large and small subunits.

It localises to the cytoplasm. It carries out the reaction Exonucleolytic cleavage in either 5'- to 3'- or 3'- to 5'-direction to yield nucleoside 5'-phosphates.. In terms of biological role, bidirectionally degrades single-stranded DNA into large acid-insoluble oligonucleotides, which are then degraded further into small acid-soluble oligonucleotides. The chain is Exodeoxyribonuclease 7 small subunit from Brucella melitensis biotype 1 (strain ATCC 23456 / CCUG 17765 / NCTC 10094 / 16M).